We begin with the raw amino-acid sequence, 245 residues long: Protein crossbronx (245 aa).

The region spanning 20 to 177 is the UBC core domain; sequence QQEYKILAEY…VQESIVESKS (158 aa).

It belongs to the ubiquitin-conjugating enzyme family. FTS subfamily.

In Drosophila virilis (Fruit fly), this protein is Protein crossbronx (cbx).